A 363-amino-acid chain; its full sequence is Fructose-bisphosphate aldolase C (363 aa).

2 residues coordinate substrate: Arg56 and Lys147. Lys230 acts as the Schiff-base intermediate with dihydroxyacetone-P in catalysis.

This sequence belongs to the class I fructose-bisphosphate aldolase family. In terms of assembly, homotetramer. As to expression, expressed in brain but not in liver or muscle.

It catalyses the reaction beta-D-fructose 1,6-bisphosphate = D-glyceraldehyde 3-phosphate + dihydroxyacetone phosphate. It participates in carbohydrate degradation; glycolysis; D-glyceraldehyde 3-phosphate and glycerone phosphate from D-glucose: step 4/4. The chain is Fructose-bisphosphate aldolase C (aldoc) from Carassius auratus (Goldfish).